We begin with the raw amino-acid sequence, 261 residues long: 14-3-3 protein 8 (261 aa).

The tract at residues 237-261 (DIPEDGEEAPKGDAANKVGAGEDAE) is disordered.

It belongs to the 14-3-3 family. In terms of assembly, homodimer.

This is 14-3-3 protein 8 (TFT8) from Solanum lycopersicum (Tomato).